We begin with the raw amino-acid sequence, 120 residues long: SPbeta prophage-derived uncharacterized protein YosG (120 aa).

This is SPbeta prophage-derived uncharacterized protein YosG (yosG) from Bacillus subtilis (strain 168).